The primary structure comprises 346 residues: Putative [LysW]-L-2-aminoadipate/[LysW]-L-glutamate phosphate reductase (346 aa).

12–15 (SGFT) serves as a coordination point for NADP(+). Cys147 is a catalytic residue. Asn310 provides a ligand contact to NADP(+).

Belongs to the NAGSA dehydrogenase family. Type 1 subfamily. LysY sub-subfamily.

It is found in the cytoplasm. It catalyses the reaction [amino-group carrier protein]-C-terminal-N-(1-carboxy-5-oxopentan-1-yl)-L-glutamine + phosphate + NADP(+) = [amino-group carrier protein]-C-terminal-N-(1-carboxy-5-phosphooxy-5-oxopentan-1-yl)-L-glutamine + NADPH + H(+). The catalysed reaction is [amino-group carrier protein]-C-terminal-gamma-(L-glutamyl-5-semialdehyde)-L-glutamate + phosphate + NADP(+) = [amino-group carrier protein]-C-terminal-gamma-(5-phospho-L-glutamyl)-L-glutamate + NADPH + H(+). The protein operates within amino-acid biosynthesis; L-lysine biosynthesis via AAA pathway; L-lysine from L-alpha-aminoadipate (Thermus route): step 3/5. Its pathway is amino-acid biosynthesis; L-arginine biosynthesis. Its function is as follows. Involved in both the arginine and lysine biosynthetic pathways. The chain is Putative [LysW]-L-2-aminoadipate/[LysW]-L-glutamate phosphate reductase from Natronomonas pharaonis (strain ATCC 35678 / DSM 2160 / CIP 103997 / JCM 8858 / NBRC 14720 / NCIMB 2260 / Gabara) (Halobacterium pharaonis).